The sequence spans 891 residues: Protein kinase kin1 (891 aa).

Residues 65–116 (GYISPSSQSPHHGPVRSPSSRKPLPASPSRTRDHSLRVPVSGHSYSADEKPR) are disordered. Residues 125 to 395 (YVLGKTIGAG…LEEVLNHPWM (271 aa)) form the Protein kinase domain. ATP is bound by residues 131–139 (IGAGSMGKV) and Lys-154. Residue Asp-266 is the Proton acceptor of the active site. At Thr-528 the chain carries Phosphothreonine. Disordered stretches follow at residues 528–699 (TPVS…RNNR), 728–747 (TMGNPVDKNSTSPSKSTDKL), and 805–841 (TPTKSTSVHTRRKPSYGSNSTTDSYGSVPDTVPLDDN). 2 stretches are compositionally biased toward low complexity: residues 529–538 (PVSSVPSSPV) and 583–603 (HSPSPSATSSIKKNPSSIFRR). A phosphoserine mark is found at Ser-535 and Ser-536. 5 stretches are compositionally biased toward polar residues: residues 612 to 629 (KSSTSTLQISAPLETSQS), 649 to 659 (LVTQSAIGRST), 669 to 699 (ISSQMDSLNMDSTGPSASNMANAPPSVRNNR), 728 to 742 (TMGNPVDKNSTSPSK), and 820 to 829 (YGSNSTTDSY). The 50-residue stretch at 842 to 891 (GESPASNLAFEIYIVKVPILSLRGVSFHRISGNSWQYKTLASRILNELKL) folds into the KA1 domain.

It belongs to the protein kinase superfamily. Ser/Thr protein kinase family.

It is found in the cytoplasm. It catalyses the reaction L-seryl-[protein] + ATP = O-phospho-L-seryl-[protein] + ADP + H(+). The catalysed reaction is L-threonyl-[protein] + ATP = O-phospho-L-threonyl-[protein] + ADP + H(+). In terms of biological role, has a role in establishing the characteristic rod cell shape. Important for cell polarity and is involved in directing growth to the cell ends. The polypeptide is Protein kinase kin1 (kin1) (Schizosaccharomyces pombe (strain 972 / ATCC 24843) (Fission yeast)).